The chain runs to 99 residues: Transmembrane protein 14A (99 aa).

A run of 3 helical transmembrane segments spans residues 1-21 (MDLI…LGYK), 24-44 (GGVL…YGAY), and 79-99 (PAGL…LLLL).

This sequence belongs to the TMEM14 family.

Its subcellular location is the mitochondrion membrane. It localises to the endoplasmic reticulum membrane. In terms of biological role, inhibits apoptosis via negative regulation of the mitochondrial outer membrane permeabilization involved in apoptotic signaling pathway. The protein is Transmembrane protein 14A (TMEM14A) of Bos taurus (Bovine).